Consider the following 157-residue polypeptide: MRIGFGYDVHRLVEGRPLILGGVQVPHDRGLAGHSDADVLLHAVADALLGAAALGDLGAHFPDTDAKWKDADSQALLRRVVERVQHAGYAPHNVDATVLLERPKLRPHVDEMRTNIARALSFPRDAVSVKATTTEGIGFVGREEGVAAQAACTIQSA.

Residues Asp-8 and His-10 each contribute to the a divalent metal cation site. 4-CDP-2-C-methyl-D-erythritol 2-phosphate-binding positions include 8 to 10 (DVH) and 34 to 35 (HS). His-42 contacts a divalent metal cation. Residues 56–58 (DLG), 61–65 (FPDTD), 132–135 (TTTE), Phe-139, and Arg-142 contribute to the 4-CDP-2-C-methyl-D-erythritol 2-phosphate site.

This sequence belongs to the IspF family. As to quaternary structure, homotrimer. A divalent metal cation is required as a cofactor.

It catalyses the reaction 4-CDP-2-C-methyl-D-erythritol 2-phosphate = 2-C-methyl-D-erythritol 2,4-cyclic diphosphate + CMP. The protein operates within isoprenoid biosynthesis; isopentenyl diphosphate biosynthesis via DXP pathway; isopentenyl diphosphate from 1-deoxy-D-xylulose 5-phosphate: step 4/6. Its function is as follows. Involved in the biosynthesis of isopentenyl diphosphate (IPP) and dimethylallyl diphosphate (DMAPP), two major building blocks of isoprenoid compounds. Catalyzes the conversion of 4-diphosphocytidyl-2-C-methyl-D-erythritol 2-phosphate (CDP-ME2P) to 2-C-methyl-D-erythritol 2,4-cyclodiphosphate (ME-CPP) with a corresponding release of cytidine 5-monophosphate (CMP). The chain is 2-C-methyl-D-erythritol 2,4-cyclodiphosphate synthase from Salinibacter ruber (strain DSM 13855 / M31).